Consider the following 323-residue polypeptide: Aspartate carbamoyltransferase catalytic subunit (323 aa).

2 residues coordinate carbamoyl phosphate: R71 and T72. L-aspartate is bound at residue K99. R121, H151, and Q154 together coordinate carbamoyl phosphate. L-aspartate-binding residues include R184 and R239. Carbamoyl phosphate contacts are provided by G280 and P281.

Belongs to the aspartate/ornithine carbamoyltransferase superfamily. ATCase family. In terms of assembly, heterododecamer (2C3:3R2) of six catalytic PyrB chains organized as two trimers (C3), and six regulatory PyrI chains organized as three dimers (R2).

It catalyses the reaction carbamoyl phosphate + L-aspartate = N-carbamoyl-L-aspartate + phosphate + H(+). It functions in the pathway pyrimidine metabolism; UMP biosynthesis via de novo pathway; (S)-dihydroorotate from bicarbonate: step 2/3. Functionally, catalyzes the condensation of carbamoyl phosphate and aspartate to form carbamoyl aspartate and inorganic phosphate, the committed step in the de novo pyrimidine nucleotide biosynthesis pathway. This Ralstonia pickettii (strain 12J) protein is Aspartate carbamoyltransferase catalytic subunit.